Reading from the N-terminus, the 187-residue chain is Pterin-4-alpha-carbinolamine dehydratase 2, mitochondrial (187 aa).

A mitochondrion-targeting transit peptide spans 1–33 (MSRLLLPKLFSISRTQVPAASLFNNLYRRHKRF).

It belongs to the pterin-4-alpha-carbinolamine dehydratase family.

It localises to the mitochondrion. The enzyme catalyses (4aS,6R)-4a-hydroxy-L-erythro-5,6,7,8-tetrahydrobiopterin = (6R)-L-erythro-6,7-dihydrobiopterin + H2O. Functionally, involved in tetrahydrobiopterin biosynthesis. Possesses pterin-4-alpha-carbinolamine dehydratase activity when expressed in a bacterial heterolgous system. The sequence is that of Pterin-4-alpha-carbinolamine dehydratase 2, mitochondrial from Arabidopsis thaliana (Mouse-ear cress).